We begin with the raw amino-acid sequence, 259 residues long: MEGNCTAETTCHVTAVVRVPKYCNCFALCYEIPILWDDVLHRHEKLLFGGFTCNAGIELIVTKHCCLAEAQTWRVHCHCSNSLSLQCMASKHVVQKVIEDFIKGGAMNKKYMWYREFVNSSRPDEINYVGSIIFRNTHYIYFRLSFFRTVHKACMEAIKRCINPELGVVLKSTYNYWLVLKCKSCSLQNYCSLKNCAVWVRSVIVRVLKEVEKTPVVLHQTTSKAEERRQSALRQAMMHGRCRQIQNLCLVNLNAFLHF.

The protein belongs to the adenoviridae E4 30 to 34 kDa protein family. Interacts with E1B-55k.

It is found in the host nucleus. The protein resides in the host cytoplasm. Its function is as follows. Plays a major role to prevent cellular inhibition of viral genome replication by nuclear bodies. Assembles an SCF-like E3 ubiquitin ligase complex based on the cellular proteins ELOB, ELOC, CUL5 and RBX1, in cooperation with viral E1B-55K. This viral RING-type ligase ubiquitinates cellular substrates prior to proteasomal degradation: p53/TP53, LIG4, MRE11-RAD50-NBS1 (MRN) complex, ITGA3, DAXX and BLM. This Canine adenovirus serotype 2 (strain Toronto A 26-61) (CAdV-2) protein is Early E4 30 kDa protein.